A 118-amino-acid chain; its full sequence is Non-specific lipid-transfer protein-like 1 (118 aa).

The 109-residue stretch at 5 to 113 (SDVIFEEIKE…KLRTILDPKM (109 aa)) folds into the SCP2 domain.

This is Non-specific lipid-transfer protein-like 1 (nlt-1) from Caenorhabditis elegans.